The sequence spans 148 residues: Large ribosomal subunit protein uL11 (148 aa).

Belongs to the universal ribosomal protein uL11 family. Part of the ribosomal stalk of the 50S ribosomal subunit. Interacts with L10 and the large rRNA to form the base of the stalk. L10 forms an elongated spine to which L12 dimers bind in a sequential fashion forming a multimeric L10(L12)X complex. Post-translationally, one or more lysine residues are methylated.

Its function is as follows. Forms part of the ribosomal stalk which helps the ribosome interact with GTP-bound translation factors. This is Large ribosomal subunit protein uL11 from Myxococcus xanthus (strain DK1622).